Here is a 240-residue protein sequence, read N- to C-terminus: Diglucosylglycerate octanoyltransferase (240 aa).

Belongs to the OctT acyltransferase family. As to quaternary structure, homotetramer.

The catalysed reaction is (2R)-2-O-[alpha-D-glucopyranosyl-(1-&gt;6)-alpha-D-glucopyranosyl]-glycerate + octanoyl-CoA = (2R)-2-O-[6-O-octanoyl-alpha-D-glucopyranosyl-(1-&gt;6)-alpha-D-glucopyranosyl]-glycerate + CoA. Sugar octanoyltransferase likely involved in the biosynthesis of mycobacterial methylglucose lipopolysaccharide (MGLP). Catalyzes the transfer of an octanoyl group from octanoyl-CoA to the C6 OH of the second glucose in diglucosylglycerate (DGG). Can also use hexanoyl-CoA as acyl donor in vitro. DGG is the preferred acceptor, but to a lesser extent, GG (glucosylglycerate) can be used as substrate. DGG and GG are the two earliest intermediates in MGLP biosynthesis. This Mycolicibacterium hassiacum (strain DSM 44199 / CIP 105218 / JCM 12690 / 3849) (Mycobacterium hassiacum) protein is Diglucosylglycerate octanoyltransferase.